The following is an 82-amino-acid chain: uncharacterized protein (82 aa).

2 helical membrane-spanning segments follow: residues 22–39 (WASD…MFIA) and 46–65 (LKMG…TWVI).

It localises to the cell membrane. This is an uncharacterized protein from Bacillus subtilis (strain 168).